The sequence spans 273 residues: Hydroxyethylthiazole kinase (273 aa).

Met-41 provides a ligand contact to substrate. 2 residues coordinate ATP: Arg-117 and Thr-170. Gly-197 is a binding site for substrate.

Belongs to the Thz kinase family. Mg(2+) serves as cofactor.

It catalyses the reaction 5-(2-hydroxyethyl)-4-methylthiazole + ATP = 4-methyl-5-(2-phosphooxyethyl)-thiazole + ADP + H(+). It functions in the pathway cofactor biosynthesis; thiamine diphosphate biosynthesis; 4-methyl-5-(2-phosphoethyl)-thiazole from 5-(2-hydroxyethyl)-4-methylthiazole: step 1/1. Its function is as follows. Catalyzes the phosphorylation of the hydroxyl group of 4-methyl-5-beta-hydroxyethylthiazole (THZ). The chain is Hydroxyethylthiazole kinase from Clostridium acetobutylicum (strain ATCC 824 / DSM 792 / JCM 1419 / IAM 19013 / LMG 5710 / NBRC 13948 / NRRL B-527 / VKM B-1787 / 2291 / W).